A 188-amino-acid chain; its full sequence is Mediator of RNA polymerase II transcription subunit 11 (188 aa).

Residues 46–72 are a coiled coil; sequence KNKMEDNANNFKKLITQVENELSAQMQ. Positions 116-188 are disordered; the sequence is DPTSDEPQTT…MTDDDDDMEQ (73 aa). Over residues 123-141 the composition is skewed to acidic residues; sequence QTTEEDEEDGSDDLNEDGA. Low complexity predominate over residues 146–155; it reads SSTVTSSTTD. Basic and acidic residues predominate over residues 171 to 180; sequence SQEESGRQMT.

Belongs to the Mediator complex subunit 11 family. In terms of assembly, component of the Mediator complex.

It is found in the nucleus. Component of the Mediator complex, a coactivator involved in the regulated transcription of nearly all RNA polymerase II-dependent genes. Mediator functions as a bridge to convey information from gene-specific regulatory proteins to the basal RNA polymerase II transcription machinery. Mediator is recruited to promoters by direct interactions with regulatory proteins and serves as a scaffold for the assembly of a functional pre-initiation complex with RNA polymerase II and the general transcription factors. This chain is Mediator of RNA polymerase II transcription subunit 11 (mdt-11), found in Caenorhabditis elegans.